Reading from the N-terminus, the 282-residue chain is Phycocyanobilin lyase subunit beta (282 aa).

This sequence belongs to the CpcE/RpcE/PecE family. In terms of assembly, cpcE and CpcF associate to form a lyase.

Required for the chromophorylation of the CpcA gene product. The protein is Phycocyanobilin lyase subunit beta (cpcF1) of Pseudanabaena tenuis (strain PCC 7409).